Here is a 135-residue protein sequence, read N- to C-terminus: DNA-directed RNA polymerase subunit omega (135 aa).

Positions 107-135 (ASQESQDYEVDGEIDDEINDQDGDEEVSV) are disordered. Acidic residues predominate over residues 112 to 135 (QDYEVDGEIDDEINDQDGDEEVSV).

This sequence belongs to the RNA polymerase subunit omega family. The RNAP catalytic core consists of 2 alpha, 1 beta, 1 beta' and 1 omega subunit. When a sigma factor is associated with the core the holoenzyme is formed, which can initiate transcription.

The enzyme catalyses RNA(n) + a ribonucleoside 5'-triphosphate = RNA(n+1) + diphosphate. In terms of biological role, promotes RNA polymerase assembly. Latches the N- and C-terminal regions of the beta' subunit thereby facilitating its interaction with the beta and alpha subunits. In Wolbachia pipientis wMel, this protein is DNA-directed RNA polymerase subunit omega.